The following is a 308-amino-acid chain: MASWNQRTVAKRVSCTGVGLHSGRPATLTLAPAPADAGITFVRMDLGVEIPARNEHVVDTMLSTSLGRGGARVATVEHVMAALHGMGIDACRVEVDGPEIPILDGSAAPFTCLVQEAGVKVLPAGKRYLVVDQPVEIRDGDKLARLEPADGFSVSFTADFGHPLITDQSFQVKLGERAFEREVARARTFCFRRDIEKMQAMGLAKGGSLENAIVVDEFSILNPEGLRFPDEFARHKVLDAIGDLALFGMPVVGALVAVKSGHAMNQALVKKVLADPAAHRVVRVTGEADAPALRAKVPALAIHEGSAA.

Residues histidine 78, histidine 235, and aspartate 239 each coordinate Zn(2+). The active-site Proton donor is histidine 262.

The protein belongs to the LpxC family. It depends on Zn(2+) as a cofactor.

The catalysed reaction is a UDP-3-O-[(3R)-3-hydroxyacyl]-N-acetyl-alpha-D-glucosamine + H2O = a UDP-3-O-[(3R)-3-hydroxyacyl]-alpha-D-glucosamine + acetate. It participates in glycolipid biosynthesis; lipid IV(A) biosynthesis; lipid IV(A) from (3R)-3-hydroxytetradecanoyl-[acyl-carrier-protein] and UDP-N-acetyl-alpha-D-glucosamine: step 2/6. In terms of biological role, catalyzes the hydrolysis of UDP-3-O-myristoyl-N-acetylglucosamine to form UDP-3-O-myristoylglucosamine and acetate, the committed step in lipid A biosynthesis. The polypeptide is UDP-3-O-acyl-N-acetylglucosamine deacetylase (Anaeromyxobacter dehalogenans (strain 2CP-C)).